The primary structure comprises 560 residues: DNA ligase B (560 aa).

Lysine 124 acts as the N6-AMP-lysine intermediate in catalysis.

Belongs to the NAD-dependent DNA ligase family. LigB subfamily.

The enzyme catalyses NAD(+) + (deoxyribonucleotide)n-3'-hydroxyl + 5'-phospho-(deoxyribonucleotide)m = (deoxyribonucleotide)n+m + AMP + beta-nicotinamide D-nucleotide.. Functionally, catalyzes the formation of phosphodiester linkages between 5'-phosphoryl and 3'-hydroxyl groups in double-stranded DNA using NAD as a coenzyme and as the energy source for the reaction. The sequence is that of DNA ligase B from Shigella sonnei (strain Ss046).